A 448-amino-acid polypeptide reads, in one-letter code: Leukocyte immunoglobulin-like receptor subfamily B member 4 (448 aa).

The first 21 residues, 1–21 (MIPTFTALLCLGLSLGPRTHM), serve as a signal peptide directing secretion. At 22 to 259 (QAGPLPKPTL…PHSGLRRHWE (238 aa)) the chain is on the extracellular side. 2 Ig-like C2-type domains span residues 27–118 (PKPT…LVMT) and 124–218 (PTLS…LIVS). Intrachain disulfides connect Cys-49–Cys-98 and Cys-144–Cys-195. Residues 217-248 (VSGSLEDPRPSPTRSVSTAAGPEDQPLMPTGS) form a disordered region. A helical transmembrane segment spans residues 260–280 (VLIGVLVVSILLLSLLLFLLL). Over 281 to 448 (QHWRQGKHRT…PSVYATLAIH (168 aa)) the chain is Cytoplasmic. A disordered region spans residues 297-448 (DFQRPPGAAE…PSVYATLAIH (152 aa)). Residue Ser-319 is modified to Phosphoserine. Positions 344–354 (MDTRQSPHDED) are enriched in basic and acidic residues. The short motif at 358–363 (VTYAKV) is the ITIM motif 1 element. Residues 384–398 (LDTKDRQAEEDRQMD) are compositionally biased toward basic and acidic residues. Short sequence motifs (ITIM motif) lie at residues 410-415 (VTYAQL) and 440-445 (SVYATL).

Interacts with PTPN6. As to expression, detected on monocytes, macrophages, dendritic cells, natural killer cells and B-cells (at protein level). Expressed in the lung.

Its subcellular location is the cell membrane. Its function is as follows. Inhibitory receptor involved in the down-regulation of the immune response and the development of immune tolerance. Receptor for FN1. Receptor for apolipoprotein APOE. Receptor for ALCAM/CD166. Inhibits receptor-mediated phosphorylation of cellular proteins and mobilization of intracellular calcium ions. Inhibits FCGR1A/CD64-mediated monocyte activation by inducing phosphatase-mediated down-regulation of the phosphorylation of multiple proteins including LCK, SYK, LAT and ERK, leading to a reduction in TNF production. This inhibition of monocyte activation occurs at least in part via binding to FN1. Inhibits T cell proliferation, inducing anergy, suppressing the differentiation of IFNG-producing CD8+ cytotoxic T cells and enhancing the generation of CD8+ T suppressor cells. Induces up-regulation of CD86 on dendritic cells. Interferes with TNFRSF5-signaling and NF-kappa-B up-regulation. The sequence is that of Leukocyte immunoglobulin-like receptor subfamily B member 4 (LILRB4) from Homo sapiens (Human).